A 185-amino-acid polypeptide reads, in one-letter code: Crossover junction endodeoxyribonuclease RuvC (185 aa).

Catalysis depends on residues Asp-7, Glu-66, and Asp-137. 3 residues coordinate Mg(2+): Asp-7, Glu-66, and Asp-137.

It belongs to the RuvC family. As to quaternary structure, homodimer which binds Holliday junction (HJ) DNA. The HJ becomes 2-fold symmetrical on binding to RuvC with unstacked arms; it has a different conformation from HJ DNA in complex with RuvA. In the full resolvosome a probable DNA-RuvA(4)-RuvB(12)-RuvC(2) complex forms which resolves the HJ. Requires Mg(2+) as cofactor.

It localises to the cytoplasm. It catalyses the reaction Endonucleolytic cleavage at a junction such as a reciprocal single-stranded crossover between two homologous DNA duplexes (Holliday junction).. The RuvA-RuvB-RuvC complex processes Holliday junction (HJ) DNA during genetic recombination and DNA repair. Endonuclease that resolves HJ intermediates. Cleaves cruciform DNA by making single-stranded nicks across the HJ at symmetrical positions within the homologous arms, yielding a 5'-phosphate and a 3'-hydroxyl group; requires a central core of homology in the junction. The consensus cleavage sequence is 5'-(A/T)TT(C/G)-3'. Cleavage occurs on the 3'-side of the TT dinucleotide at the point of strand exchange. HJ branch migration catalyzed by RuvA-RuvB allows RuvC to scan DNA until it finds its consensus sequence, where it cleaves and resolves the cruciform DNA. The sequence is that of Crossover junction endodeoxyribonuclease RuvC from Anaeromyxobacter sp. (strain K).